The chain runs to 327 residues: Clavesin-2 (327 aa).

Positions Ile-96–Asp-257 constitute a CRAL-TRIO domain. The disordered stretch occupies residues Asp-289–Asp-327.

In terms of assembly, forms a complex with clathrin heavy chain and gamma-adaptin.

Its subcellular location is the golgi apparatus. The protein resides in the trans-Golgi network membrane. It is found in the early endosome membrane. It localises to the cytoplasmic vesicle. The protein localises to the clathrin-coated vesicle. Required for normal morphology of late endosomes and/or lysosomes in neurons. Binds phosphatidylinositol 3,5-bisphosphate (PtdIns(3,5)P2). This chain is Clavesin-2 (Clvs2), found in Mus musculus (Mouse).